The sequence spans 1250 residues: Protein SSD1 (1250 aa).

Positions 1–22 (MSKNSNVNNNRSQEPNNMFVQT) are enriched in polar residues. Residues 1–32 (MSKNSNVNNNRSQEPNNMFVQTTGGGKNAPKQ) are disordered. Ser-2 is subject to N-acetylserine. Ser-40 is subject to Phosphoserine. The segment at 79–163 (TGQYLSGNSG…SSIYGHSRRH (85 aa)) is disordered. Residues 84–94 (SGNSGSNNHFT) show a composition bias toward polar residues. Low complexity predominate over residues 124–145 (NNSGYYHNSYDNNNNSNNPGSN). A phosphoserine mark is found at Ser-164 and Ser-183. A compositionally biased stretch (polar residues) spans 197 to 208 (QADSGSNSTTEQ). Disordered stretches follow at residues 197 to 338 (QADS…GGRK), 418 to 443 (KEKEEKKRRKDASMQHDLIPLNSSDD), and 455 to 517 (SNNF…DDVE). Thr-227 bears the Phosphothreonine mark. Residues 264–276 (NEYSPGINSNWRN) are compositionally biased toward polar residues. The span at 277–287 (QSQQPQQQLSP) shows a compositional bias: low complexity. Ser-286 and Ser-322 each carry phosphoserine. Polar residues predominate over residues 319-329 (SNSSVHSFSSQ). The span at 481-495 (STINNDSDSLSSPTK) shows a compositional bias: polar residues. 2 positions are modified to phosphoserine: Ser-491 and Ser-492. Residues 497 to 510 (GVRRRSSLKQRPTQ) show a composition bias toward basic residues. The CSD2 domain maps to 582 to 657 (AWFKPTDKKV…EIDSILRDNN (76 aa)). Tyr-688 is subject to Phosphotyrosine. Residues 694-1015 (DTNEYNIFAI…VHRQLKAVIH (322 aa)) form the RNB domain. The region spanning 1064–1148 (GQLLTMATVL…SIKNKFRSTA (85 aa)) is the DIS3L2 C-terminal domain.

The protein belongs to the RNR ribonuclease family.

Can suppress the lethality due to deletion of SIT4, and partially the defects due to BCY1 disruption. Is implicated in the control of the cell cycle G1 phase. The sequence is that of Protein SSD1 (SSD1) from Saccharomyces cerevisiae (strain ATCC 204508 / S288c) (Baker's yeast).